The sequence spans 286 residues: Transcription factor MYB62 (286 aa).

2 consecutive HTH myb-type domains span residues 16 to 68 and 69 to 123; these read DEEL…LNYL and KPDI…QKQA. DNA-binding regions (H-T-H motif) lie at residues 44 to 68 and 96 to 119; these read WNHVAKCAGLKRTGKSCRLRWLNYL and WSKIAQYLPGRTDNEIKNYWRTRV.

Expressed in leaves and flowers.

It localises to the nucleus. Functionally, transcription repressor of phosphate (Pi) starvation-induced genes. Negatively regulates Pi starvation responses via the repression of gibberellic acid (GA) biosynthesis and signaling. Modulates root architecture, phosphatase activity, and Pi uptake and accumulation. The protein is Transcription factor MYB62 of Arabidopsis thaliana (Mouse-ear cress).